We begin with the raw amino-acid sequence, 32 residues long: MSDIN-like toxin proprotein 1 (32 aa).

The propeptide occupies 1 to 10 (MSDINATCLP). The cyclopeptide (Ala-Pro) cross-link spans 11–17 (AWLALCP). Residues 18–32 (CVGDDVNPTLTRGGT) constitute a propeptide that is removed on maturation.

It belongs to the MSDIN fungal toxin family. Post-translationally, processed by the macrocyclase-peptidase enzyme POPB to yield a toxic cyclic heptapeptide. POPB first removes 10 residues from the N-terminus. Conformational trapping of the remaining peptide forces the enzyme to release this intermediate rather than proceed to macrocyclization. The enzyme rebinds the remaining peptide in a different conformation and catalyzes macrocyclization of the N-terminal 7 residues.

Probable toxin that belongs to the MSDIN-like toxin family responsible for a large number of food poisoning cases and deaths. This chain is MSDIN-like toxin proprotein 1, found in Amanita fuligineoides.